A 624-amino-acid chain; its full sequence is Cell pattern formation-associated protein ust1 (624 aa).

Disordered stretches follow at residues 1–24 and 43–99; these read MSTASPLHHGHGNGSYANSPAPTG and RSGS…GHSS. Positions 43-62 are enriched in low complexity; that stretch reads RSGSVPASASGSAPGSASGS. The span at 70-85 shows a compositional bias: basic residues; it reads QHHTGHHHYSAHHTHS. An HTH APSES-type domain is found at 233 to 339; that stretch reads RVTTTLWEDE…PNIQSFLYHP (107 aa). Residues 267–288 constitute a DNA-binding region (H-T-H motif); the sequence is GTKLLNVCGMSRGKRDGILKNE. Over residues 352-362 the composition is skewed to low complexity; sequence AQERQAQRQRA. Disordered stretches follow at residues 352 to 456, 474 to 504, and 538 to 624; these read AQER…QQQQ, QQAYPMTAAQQLARPSVGDRRQSAPISLNNS, and SWND…IHHE. The span at 369–391 shows a compositional bias: polar residues; the sequence is PGANGTSQAPPLMRANTTPSNGD. Positions 392 to 426 are enriched in low complexity; that stretch reads TSTFSSGLSSLGSWTGSHDQGHASAPTTAQPSPSS. Residues 427–451 are compositionally biased toward polar residues; that stretch reads MHNGATQMHMSLSNHGTASPTYAQS. Positions 571 to 587 are enriched in basic and acidic residues; that stretch reads LDGDDLHSPDSSDDRLA. Residues 615 to 624 show a composition bias toward gly residues; that stretch reads VGNGSGIHHE.

The protein belongs to the EFG1/PHD1/stuA family. In terms of processing, phosphorylated but is not a target of cAMP signaling.

It is found in the nucleus. Functionally, transcription factor that regulates asexual reproduction. Binds the StuA-response elements (StRE) with the consensus sequence 5'-(A/T)CGCG(T/A)N(A/C)-3' at the promoters of target genes. Regulates dimorphism, virulence, and the sporulation program. Required for mating, gall induction, and sporogenesis in maize tissue. Regulates expression of the filament-down-regulated gene UM00205 and the teliospore-specific gene ssp1. In Mycosarcoma maydis (Corn smut fungus), this protein is Cell pattern formation-associated protein ust1 (ust1).